Here is a 343-residue protein sequence, read N- to C-terminus: HTH-type transcriptional regulator GntR (343 aa).

One can recognise an HTH lacI-type domain in the interval 16–70 (PTLNEVARRAGVSPITASRALRGVASVAEELAQKVRDAARELGYVANPAARALAS). Positions 18–37 (LNEVARRAGVSPITASRALR) form a DNA-binding region, H-T-H motif.

Free GntR fails to recognize gluconate and 6-phosphogluconate, whereas the GntR/DNA complexes recognize both ligands. It is therefore likely that GntR DNA binding induces structural changes that permit GntR to recognize effectors. Involved in the regulation of glucose metabolism. Represses its own expression as well as that of the gluconate permease GntP. It employs an effector mediated de-repression mechanism: in the absence of ligand, GntR binds to the gntR and gntP promoters and represses their expression. The release of promoter bound GntR is induced by gluconate and 6-phosphogluconate that bind with similar apparent affinities to the GntR/DNA complex. The release of GntR leads to transcription of the genes. The polypeptide is HTH-type transcriptional regulator GntR (Pseudomonas aeruginosa (strain ATCC 15692 / DSM 22644 / CIP 104116 / JCM 14847 / LMG 12228 / 1C / PRS 101 / PAO1)).